A 405-amino-acid chain; its full sequence is Formate-dependent phosphoribosylglycinamide formyltransferase (405 aa).

N(1)-(5-phospho-beta-D-ribosyl)glycinamide-binding positions include 27-28 (EL) and glutamate 87. ATP-binding positions include arginine 120, lysine 162, 167-172 (SSGKGQ), 202-205 (EGFI), and glutamate 210. Positions 125–320 (RLAAETLGLP…EFELHARALL (196 aa)) constitute an ATP-grasp domain. Residues glutamate 279 and glutamate 291 each coordinate Mg(2+). Residues aspartate 298, lysine 367, and 374–375 (RR) each bind N(1)-(5-phospho-beta-D-ribosyl)glycinamide.

Belongs to the PurK/PurT family. In terms of assembly, homodimer.

It catalyses the reaction N(1)-(5-phospho-beta-D-ribosyl)glycinamide + formate + ATP = N(2)-formyl-N(1)-(5-phospho-beta-D-ribosyl)glycinamide + ADP + phosphate + H(+). It participates in purine metabolism; IMP biosynthesis via de novo pathway; N(2)-formyl-N(1)-(5-phospho-D-ribosyl)glycinamide from N(1)-(5-phospho-D-ribosyl)glycinamide (formate route): step 1/1. Involved in the de novo purine biosynthesis. Catalyzes the transfer of formate to 5-phospho-ribosyl-glycinamide (GAR), producing 5-phospho-ribosyl-N-formylglycinamide (FGAR). Formate is provided by PurU via hydrolysis of 10-formyl-tetrahydrofolate. The polypeptide is Formate-dependent phosphoribosylglycinamide formyltransferase (Bordetella avium (strain 197N)).